Here is a 404-residue protein sequence, read N- to C-terminus: Sorting nexin-5 (404 aa).

Position 2 is an N-acetylalanine (A2). Residues 25–172 form the PX domain; it reads LNVDPSLQID…HVFLEYDQDL (148 aa). A 1,2-diacyl-sn-glycero-3-phospho-(1D-myo-inositol-4,5-bisphosphate)-binding positions include 40-46, 99-105, and 113-116; these read SERDKVK, FDGPREK, and EGSM. The interaction with DOCK1 stretch occupies residues 169-261; that stretch reads DQDLSVRRKN…HSLALEEPTV (93 aa). Residues 183–200 form a membrane-binding amphipathic helix region; it reads FGGFFKSVVKSADEVLFS. At S193 the chain carries Phosphoserine. Residues 202–404 form the BAR domain; sequence VKEVDDFFEQ…QSCIDLFKNN (203 aa). The residue at position 275 (K275) is an N6-acetyllysine.

This sequence belongs to the sorting nexin family. Forms heterodimers with BAR domain-containing sorting nexins SNX1 and SNX2; does not homodimerize. The heterodimers are proposed to self-assemble into helical arrays on the membrane to stabilize and expand local membrane curvature underlying endosomal tubule formation. Thought to be a component of the originally described retromer complex (also called SNX-BAR retromer) which is a pentamer containing the heterotrimeric retromer cargo-selective complex (CSC), also described as vacuolar protein sorting subcomplex (VPS), and a heterodimeric membrane-deforming subcomplex formed between SNX1 or SNX2 and SNX5 or SNX6 (also called SNX-BAR subcomplex); the respective CSC and SNX-BAR subcomplexes associate with low affinity. Interacts with SNX1, SNX2, VPS26A, VPS29, VPS35, DCTN1, DOCK1, MIB1, PIP5K1C. Interacts with HGS; increased by PIP5K1C kinase activity and by PtdIns(3P) and/or PtdIns(3,4)P2. Detected in macrophages (at protein level).

It localises to the endosome. The protein resides in the early endosome. It is found in the early endosome membrane. The protein localises to the cell membrane. Its subcellular location is the cytoplasmic vesicle membrane. It localises to the cytoplasm. The protein resides in the cell projection. It is found in the phagocytic cup. The protein localises to the ruffle. Its function is as follows. Involved in several stages of intracellular trafficking. Interacts with membranes containing phosphatidylinositol lipids. Acts in part as component of the retromer membrane-deforming SNX-BAR subcomplex. The SNX-BAR retromer mediates retrograde transport of cargo proteins from endosomes to the trans-Golgi network (TGN) and is involved in endosome-to-plasma membrane transport for cargo protein recycling. The SNX-BAR subcomplex functions to deform the donor membrane into a tubular profile called endosome-to-TGN transport carrier (ETC). Does not have in vitro vesicle-to-membrane remodeling activity. Involved in retrograde transport of lysosomal enzyme receptor IGF2R. May function as link between endosomal transport vesicles and dynactin. Plays a role in the internalization of EGFR after EGF stimulation. Involved in EGFR endosomal sorting and degradation; the function involves PIP5K1C and is retromer-independent. Together with PIP5K1C facilitates HGS interaction with ubiquitinated EGFR, which initiates EGFR sorting to intraluminal vesicles (ILVs) of the multivesicular body for subsequent lysosomal degradation. Involved in E-cadherin sorting and degradation; inhibits PIP5K1C-mediated E-cadherin degradation. Plays a role in macropinocytosis. The sequence is that of Sorting nexin-5 (Snx5) from Mus musculus (Mouse).